Consider the following 310-residue polypeptide: Putative methyltransferase mtx subunit H (310 aa).

Belongs to the MtrH family. May be part of a complex composed of 3 subunits; MtxA, MtxH and MtxX.

This is Putative methyltransferase mtx subunit H (mtxH) from Methanosarcina barkeri (strain Fusaro / DSM 804).